Reading from the N-terminus, the 143-residue chain is Hemoglobin subunit alpha-2 (143 aa).

Ser-2 is modified (N-acetylserine). The region spanning 2–143 (SLTEKDKAAV…LSLALAEKYR (142 aa)) is the Globin domain. Position 60 (His-60) interacts with O2. His-89 lines the heme b pocket.

Belongs to the globin family. As to quaternary structure, hb2 is a heterotetramer of two alpha-2 chains and two beta-1 chains; Hb3 is a heterotetramer of two alpha-2 chains and two beta-2 chains. In terms of tissue distribution, red blood cells.

Its function is as follows. Involved in oxygen transport from gills to the various peripheral tissues. This is Hemoglobin subunit alpha-2 (hba2) from Anarhichas minor (Arctic spotted wolffish).